The primary structure comprises 449 residues: Glucose-6-phosphate isomerase (449 aa).

Threonine 38 is subject to Phosphothreonine. The active-site Proton donor is glutamate 290. Active-site residues include histidine 311 and lysine 425.

It belongs to the GPI family.

The protein resides in the cytoplasm. The catalysed reaction is alpha-D-glucose 6-phosphate = beta-D-fructose 6-phosphate. It participates in carbohydrate biosynthesis; gluconeogenesis. The protein operates within carbohydrate degradation; glycolysis; D-glyceraldehyde 3-phosphate and glycerone phosphate from D-glucose: step 2/4. Catalyzes the reversible isomerization of glucose-6-phosphate to fructose-6-phosphate. This chain is Glucose-6-phosphate isomerase, found in Geobacillus thermodenitrificans (strain NG80-2).